The following is a 319-amino-acid chain: Acetyl-coenzyme A carboxylase carboxyl transferase subunit alpha (319 aa).

Residues 35-296 (NIDEEVHRLR…KAQLLEDLAD (262 aa)) form the CoA carboxyltransferase C-terminal domain.

This sequence belongs to the AccA family. Acetyl-CoA carboxylase is a heterohexamer composed of biotin carboxyl carrier protein (AccB), biotin carboxylase (AccC) and two subunits each of ACCase subunit alpha (AccA) and ACCase subunit beta (AccD).

The protein resides in the cytoplasm. The catalysed reaction is N(6)-carboxybiotinyl-L-lysyl-[protein] + acetyl-CoA = N(6)-biotinyl-L-lysyl-[protein] + malonyl-CoA. Its pathway is lipid metabolism; malonyl-CoA biosynthesis; malonyl-CoA from acetyl-CoA: step 1/1. Functionally, component of the acetyl coenzyme A carboxylase (ACC) complex. First, biotin carboxylase catalyzes the carboxylation of biotin on its carrier protein (BCCP) and then the CO(2) group is transferred by the carboxyltransferase to acetyl-CoA to form malonyl-CoA. This chain is Acetyl-coenzyme A carboxylase carboxyl transferase subunit alpha, found in Salmonella dublin (strain CT_02021853).